Consider the following 574-residue polypeptide: Pre-mRNA-processing protein 45 (574 aa).

5 disordered regions span residues 1-46, 203-234, 350-406, 478-503, and 549-574; these read MAAL…WKPK, PPRF…TAQD, ETGI…SEMR, AGSS…SKDR, and MDAA…ARDE. Composition is skewed to pro residues over residues 24–33 and 215–224; these read APLPTTPGPQ and PAEPPPPVLQ. Residues 363–377 show a composition bias toward acidic residues; sequence GSEEESDEEEEDEEA. 3 stretches are compositionally biased toward basic and acidic residues: residues 378-397, 493-503, and 558-574; these read IRER…KEMR, EGIKEEMSKDR, and RTAE…ARDE.

Belongs to the SNW family. Associated with the spliceosome.

The protein resides in the nucleus. Functionally, involved in pre-mRNA splicing. The chain is Pre-mRNA-processing protein 45 (PRP45) from Cryptococcus neoformans var. neoformans serotype D (strain JEC21 / ATCC MYA-565) (Filobasidiella neoformans).